The following is a 537-amino-acid chain: MAPLSKALSVFMLMGITYAFNYDQPYRGQYHFSPQKNWMNDPNGLLYHNGTYHLFFQYNPGGIEWGNISWGHAISEDLTHWEEKPVALLARGFGSDVTEMYFSGSAVADVNNTSGFGKDGKTPLVAMYTSYYPVAQTLPSGQTVQEDQQSQSIAYSLDDGLTWTTYDAANPVIPNPPSPYEAEYQNFRDPFVFWHDESQKWVVVTSIAELHKLAIYTSDNLKDWKLVSEFGPYNAQGGVWECPGLVKLPLDSGNSTKWVITSGLNPGGPPGTVGSGTQYFVGEFDGTTFTPDADTVYPGNSTANWMDWGPDFYAAAGYNGLSLNDHVHIGWMNNWQYGANIPTYPWRSAMAIPRHMALKTIGSKATLVQQPQEAWSSISNKRPIYSRTFKTLSEGSTNTTTTGETFKVDLSFSAKSKASTFAIALRASANFTEQTLVGYDFAKQQIFLDRTHSGDVSFDETFASVYHGPLTPDSTGVVKLSIFVDRSSVEVFGGQGETTLTAQIFPSSDAVHARLASTGGTTEDVRADIYKIASTWN.

The first 19 residues, 1–19, serve as a signal peptide directing secretion; sequence MAPLSKALSVFMLMGITYA. Positions 40 and 41 each coordinate beta-D-fructose. Asp41 (nucleophile) is an active-site residue. Asn49 carries an N-linked (GlcNAc...) asparagine glycan. Beta-D-fructose contacts are provided by Gln57 and Trp65. A glycan (N-linked (GlcNAc...) asparagine) is linked at Asn67. Ser103 contributes to the beta-D-fructose binding site. Asn111 and Asn112 each carry an N-linked (GlcNAc...) asparagine glycan. 3 residues coordinate beta-D-fructose: Arg188, Asp189, and Glu241. Catalysis depends on Glu241, which acts as the Proton donor/acceptor. 2 N-linked (GlcNAc...) asparagine glycosylation sites follow: Asn254 and Asn300. Beta-D-fructose is bound at residue Trp335. Residues Asn398 and Asn430 are each glycosylated (N-linked (GlcNAc...) asparagine).

It belongs to the glycosyl hydrolase 32 family.

It is found in the secreted. The enzyme catalyses Hydrolysis of terminal, non-reducing (2-&gt;1)- and (2-&gt;6)-linked beta-D-fructofuranose residues in fructans.. Its function is as follows. Exo-inulinase involved in utilization of the plant storage polymer inulin, consisting of fructooligosaccharides with a degree of polymerization (DP) value from 2 to 60. Splits off terminal fructose units successively from the non-reducing end of the inulin molecule, and also hydrolyzes levan, stachyose and raffinose. Hydrolyzes both beta-2,1- as well as beta-2,6-fructosyl linkages in fructooligosaccharides. The sequence is that of Extracellular exo-inulinase from Aspergillus awamori (Black koji mold).